The primary structure comprises 372 residues: tRNA 2-selenouridine synthase (372 aa).

Positions 19–142 constitute a Rhodanese domain; it reads LASGHPIMDV…MRQYLIDTID (124 aa). C102 functions as the S-selanylcysteine intermediate in the catalytic mechanism.

It belongs to the SelU family. As to quaternary structure, monomer.

It carries out the reaction 5-methylaminomethyl-2-thiouridine(34) in tRNA + selenophosphate + (2E)-geranyl diphosphate + H2O + H(+) = 5-methylaminomethyl-2-selenouridine(34) in tRNA + (2E)-thiogeraniol + phosphate + diphosphate. The enzyme catalyses 5-methylaminomethyl-2-thiouridine(34) in tRNA + (2E)-geranyl diphosphate = 5-methylaminomethyl-S-(2E)-geranyl-thiouridine(34) in tRNA + diphosphate. It catalyses the reaction 5-methylaminomethyl-S-(2E)-geranyl-thiouridine(34) in tRNA + selenophosphate + H(+) = 5-methylaminomethyl-2-(Se-phospho)selenouridine(34) in tRNA + (2E)-thiogeraniol. The catalysed reaction is 5-methylaminomethyl-2-(Se-phospho)selenouridine(34) in tRNA + H2O = 5-methylaminomethyl-2-selenouridine(34) in tRNA + phosphate. In terms of biological role, involved in the post-transcriptional modification of the uridine at the wobble position (U34) of tRNA(Lys), tRNA(Glu) and tRNA(Gln). Catalyzes the conversion of 2-thiouridine (S2U-RNA) to 2-selenouridine (Se2U-RNA). Acts in a two-step process involving geranylation of 2-thiouridine (S2U) to S-geranyl-2-thiouridine (geS2U) and subsequent selenation of the latter derivative to 2-selenouridine (Se2U) in the tRNA chain. The polypeptide is tRNA 2-selenouridine synthase (Shewanella loihica (strain ATCC BAA-1088 / PV-4)).